A 475-amino-acid polypeptide reads, in one-letter code: Sulfate adenylyltransferase subunit 1 (475 aa).

The tr-type G domain maps to 25 to 239; sequence KSLLRFLTCG…EVLETVEIQR (215 aa). The interval 34–41 is G1; that stretch reads GSVDDGKS. A GTP-binding site is contributed by 34 to 41; sequence GSVDDGKS. A G2 region spans residues 92-96; the sequence is GITID. The tract at residues 113–116 is G3; the sequence is DTPG. Residues 113–117 and 168–171 each bind GTP; these read DTPGH and NKMD. The tract at residues 168 to 171 is G4; it reads NKMD. The segment at 206–208 is G5; sequence SAL.

The protein belongs to the TRAFAC class translation factor GTPase superfamily. Classic translation factor GTPase family. CysN/NodQ subfamily. In terms of assembly, heterodimer composed of CysD, the smaller subunit, and CysN.

The enzyme catalyses sulfate + ATP + H(+) = adenosine 5'-phosphosulfate + diphosphate. Its pathway is sulfur metabolism; hydrogen sulfide biosynthesis; sulfite from sulfate: step 1/3. Its function is as follows. With CysD forms the ATP sulfurylase (ATPS) that catalyzes the adenylation of sulfate producing adenosine 5'-phosphosulfate (APS) and diphosphate, the first enzymatic step in sulfur assimilation pathway. APS synthesis involves the formation of a high-energy phosphoric-sulfuric acid anhydride bond driven by GTP hydrolysis by CysN coupled to ATP hydrolysis by CysD. The polypeptide is Sulfate adenylyltransferase subunit 1 (Shigella dysenteriae serotype 1 (strain Sd197)).